Here is a 900-residue protein sequence, read N- to C-terminus: Minor teichoic acid biosynthesis protein GgaB (900 aa).

The protein belongs to the glycosyltransferase 2 family.

It functions in the pathway cell wall biogenesis; poly(glucopyranosyl N-acetylgalactosamine 1-phosphate) teichoic acid biosynthesis. Its function is as follows. Involved in the biosynthesis of galactosamine-containing minor teichoic acid, a non-essential cell wall polymer in B.subtilis 168. This Bacillus subtilis (strain 168) protein is Minor teichoic acid biosynthesis protein GgaB (ggaB).